A 425-amino-acid chain; its full sequence is Serine--tRNA ligase (425 aa).

231-233 (TAE) contributes to the L-serine binding site. 262-264 (RSE) serves as a coordination point for ATP. E285 lines the L-serine pocket. An ATP-binding site is contributed by 349 to 352 (EISS). S385 is an L-serine binding site.

This sequence belongs to the class-II aminoacyl-tRNA synthetase family. Type-1 seryl-tRNA synthetase subfamily. In terms of assembly, homodimer. The tRNA molecule binds across the dimer.

It is found in the cytoplasm. The catalysed reaction is tRNA(Ser) + L-serine + ATP = L-seryl-tRNA(Ser) + AMP + diphosphate + H(+). It carries out the reaction tRNA(Sec) + L-serine + ATP = L-seryl-tRNA(Sec) + AMP + diphosphate + H(+). The protein operates within aminoacyl-tRNA biosynthesis; selenocysteinyl-tRNA(Sec) biosynthesis; L-seryl-tRNA(Sec) from L-serine and tRNA(Sec): step 1/1. Catalyzes the attachment of serine to tRNA(Ser). Is also able to aminoacylate tRNA(Sec) with serine, to form the misacylated tRNA L-seryl-tRNA(Sec), which will be further converted into selenocysteinyl-tRNA(Sec). This Bartonella tribocorum (strain CIP 105476 / IBS 506) protein is Serine--tRNA ligase.